A 151-amino-acid polypeptide reads, in one-letter code: Protein Smg homolog (151 aa).

This sequence belongs to the Smg family.

This Laribacter hongkongensis (strain HLHK9) protein is Protein Smg homolog.